We begin with the raw amino-acid sequence, 123 residues long: Methicillin resistance regulatory protein MecI (123 aa).

A DNA-binding region (H-T-H motif) is located at residues 7–71 (EISSAEWEVM…KDNKIFQYYS (65 aa)). Residues 74 to 123 (EESDIKYKTSKNFINKVYKGGFNSLVLNFVEKEDLSQDEIEELRNILNKK) form an important for dimerization region.

The protein belongs to the BlaI transcriptional regulatory family. As to quaternary structure, monomer and homodimer. Post-translationally, upon exposure to beta-lactams, proteolytic cleavage at a single site impairs dimerization and abolishes repressor activity.

The protein localises to the cytoplasm. In terms of biological role, transcriptional repressor that constitutively blocks the transcription of the gene for the penicillin-binding protein MecA. Binds palindromic DNA with the sequence 5'-TACA-[AT]-N-TGTA-3'. Regulates genes involved in antibiotic resistance. Binds DNA as a dimer. The chain is Methicillin resistance regulatory protein MecI (mecI) from Staphylococcus aureus (strain N315).